Here is a 254-residue protein sequence, read N- to C-terminus: uncharacterized protein (254 aa).

Positions 60 to 161 (PKSPTTTSIS…PEIPQAAPGT (102 aa)) are disordered. Low complexity-rich tracts occupy residues 63–77 (PTTT…STTP) and 89–146 (TPIP…TTTS).

This is an uncharacterized protein from Caenorhabditis elegans.